We begin with the raw amino-acid sequence, 276 residues long: Diaminopimelate epimerase (276 aa).

Positions 13, 46, and 66 each coordinate substrate. C75 serves as the catalytic Proton donor. Substrate is bound by residues 76–77 (GN), N159, N192, and 210–211 (ER). Catalysis depends on C219, which acts as the Proton acceptor. Substrate is bound at residue 220–221 (GS).

It belongs to the diaminopimelate epimerase family. Homodimer.

The protein resides in the cytoplasm. It carries out the reaction (2S,6S)-2,6-diaminopimelate = meso-2,6-diaminopimelate. Its pathway is amino-acid biosynthesis; L-lysine biosynthesis via DAP pathway; DL-2,6-diaminopimelate from LL-2,6-diaminopimelate: step 1/1. In terms of biological role, catalyzes the stereoinversion of LL-2,6-diaminopimelate (L,L-DAP) to meso-diaminopimelate (meso-DAP), a precursor of L-lysine and an essential component of the bacterial peptidoglycan. The polypeptide is Diaminopimelate epimerase (Pseudoalteromonas atlantica (strain T6c / ATCC BAA-1087)).